The following is a 474-amino-acid chain: tRNA-2-methylthio-N(6)-dimethylallyladenosine synthase (474 aa).

The 118-residue stretch at 3–120 folds into the MTTase N-terminal domain; sequence KKLHIKTWGC…LPEMINSVRG (118 aa). Cys-12, Cys-49, Cys-83, Cys-157, Cys-161, and Cys-164 together coordinate [4Fe-4S] cluster. The region spanning 143–375 is the Radical SAM core domain; that stretch reads RAEGPTAFVS…QERINQQAMA (233 aa). A TRAM domain is found at 378 to 441; the sequence is RRMLGTTQRI…PNSLRGKVVR (64 aa).

This sequence belongs to the methylthiotransferase family. MiaB subfamily. In terms of assembly, monomer. It depends on [4Fe-4S] cluster as a cofactor.

Its subcellular location is the cytoplasm. It carries out the reaction N(6)-dimethylallyladenosine(37) in tRNA + (sulfur carrier)-SH + AH2 + 2 S-adenosyl-L-methionine = 2-methylsulfanyl-N(6)-dimethylallyladenosine(37) in tRNA + (sulfur carrier)-H + 5'-deoxyadenosine + L-methionine + A + S-adenosyl-L-homocysteine + 2 H(+). In terms of biological role, catalyzes the methylthiolation of N6-(dimethylallyl)adenosine (i(6)A), leading to the formation of 2-methylthio-N6-(dimethylallyl)adenosine (ms(2)i(6)A) at position 37 in tRNAs that read codons beginning with uridine. This chain is tRNA-2-methylthio-N(6)-dimethylallyladenosine synthase, found in Escherichia coli (strain SE11).